Consider the following 114-residue polypeptide: Large ribosomal subunit protein bL19 (114 aa).

Belongs to the bacterial ribosomal protein bL19 family.

This protein is located at the 30S-50S ribosomal subunit interface and may play a role in the structure and function of the aminoacyl-tRNA binding site. The protein is Large ribosomal subunit protein bL19 of Bacillus cereus (strain AH187).